The sequence spans 137 residues: Ribosome-binding factor A (137 aa).

This sequence belongs to the RbfA family. Monomer. Binds 30S ribosomal subunits, but not 50S ribosomal subunits or 70S ribosomes.

The protein localises to the cytoplasm. One of several proteins that assist in the late maturation steps of the functional core of the 30S ribosomal subunit. Associates with free 30S ribosomal subunits (but not with 30S subunits that are part of 70S ribosomes or polysomes). Required for efficient processing of 16S rRNA. May interact with the 5'-terminal helix region of 16S rRNA. This is Ribosome-binding factor A from Cereibacter sphaeroides (strain KD131 / KCTC 12085) (Rhodobacter sphaeroides).